Reading from the N-terminus, the 151-residue chain is Small ribosomal subunit protein uS11 (151 aa).

The tract at residues 130-151 (EDVTPIPSDSTRRKGGRRGRRL) is disordered. Basic residues predominate over residues 142 to 151 (RKGGRRGRRL).

It belongs to the universal ribosomal protein uS11 family.

In Aedes aegypti (Yellowfever mosquito), this protein is Small ribosomal subunit protein uS11.